The primary structure comprises 264 residues: Zinc finger protein CG30 (264 aa).

An RING-type zinc finger spans residues Cys-8–Arg-63.

It localises to the host nucleus. In terms of biological role, plays a role in the proper expression of late and very late genes. In Autographa californica nuclear polyhedrosis virus (AcMNPV), this protein is Zinc finger protein CG30 (CG30).